The sequence spans 97 residues: Mitochondrial import inner membrane translocase subunit Tim8 A (97 aa).

The short motif at cysteine 43–cysteine 66 is the Twin CX3C motif element. 2 disulfide bridges follow: cysteine 43–cysteine 66 and cysteine 47–cysteine 62. Phosphoserine occurs at positions 57, 87, 94, and 96.

The protein belongs to the small Tim family. Heterohexamer; composed of 3 copies of TIMM8A and 3 copies of TIMM13, named soluble 70 kDa complex. Associates with the TIM22 complex, whose core is composed of TIMM22. Present at high level in liver and brain, and at lower level in muscle and heart. In CNS sections, it is predominantly present in the soma and the dendritic portion of the Purkinje cells of the cerebellum, but not in the glial cells. Scattered expression also is also detected in the brain stem, olfactory bulb, substantia nigra, hippocampus and striatum (at protein level). Ubiquitously expressed.

It is found in the mitochondrion inner membrane. Functionally, mitochondrial intermembrane chaperone that participates in the import and insertion of some multi-pass transmembrane proteins into the mitochondrial inner membrane. Also required for the transfer of beta-barrel precursors from the TOM complex to the sorting and assembly machinery (SAM complex) of the outer membrane. Acts as a chaperone-like protein that protects the hydrophobic precursors from aggregation and guide them through the mitochondrial intermembrane space. The TIMM8-TIMM13 complex mediates the import of proteins such as TIMM23, SLC25A12/ARALAR1 and SLC25A13/ARALAR2, while the predominant TIMM9-TIMM10 70 kDa complex mediates the import of much more proteins. The sequence is that of Mitochondrial import inner membrane translocase subunit Tim8 A (Timm8a1) from Mus musculus (Mouse).